The following is a 317-amino-acid chain: MGTDNQTWVSEFILLGLSSDWDTRVSLFVLFLVMYVVTVLGNCLIVLLIRLDSRLHTPMYFFLTNLSLVDVSYATSVVPQLLAHFLAEHKAIPFQSCAAQLFFSLALGGIEFVLLAVMAYDRYVAVCDALRYSAIMHGGLCARLAITSWVSGFISSPVQTAITFQLPMCRNKFIDHISCELLAVVRLACVDTSSNEVTIMVSSIVLLMTPFCLVLLSYIQIISTILKIQSREGRKKAFHTCASHLTVVALCYGVAIFTYIQPHSSPSVLQEKLFSVFYAILTPMLNPMIYSLRNKEVKGAWQKLLWKFSGLTSKLAT.

Residues 1–24 lie on the Extracellular side of the membrane; it reads MGTDNQTWVSEFILLGLSSDWDTR. A glycan (N-linked (GlcNAc...) asparagine) is linked at asparagine 5. The helical transmembrane segment at 25-48 threads the bilayer; sequence VSLFVLFLVMYVVTVLGNCLIVLL. The Cytoplasmic segment spans residues 49–57; sequence IRLDSRLHT. Residues 58–79 traverse the membrane as a helical segment; the sequence is PMYFFLTNLSLVDVSYATSVVP. At 80-100 the chain is on the extracellular side; that stretch reads QLLAHFLAEHKAIPFQSCAAQ. Cysteine 97 and cysteine 189 are disulfide-bonded. Residues 101-120 form a helical membrane-spanning segment; the sequence is LFFSLALGGIEFVLLAVMAY. The Cytoplasmic segment spans residues 121–139; that stretch reads DRYVAVCDALRYSAIMHGG. A helical membrane pass occupies residues 140–160; the sequence is LCARLAITSWVSGFISSPVQT. Residues 161–200 lie on the Extracellular side of the membrane; the sequence is AITFQLPMCRNKFIDHISCELLAVVRLACVDTSSNEVTIM. The chain crosses the membrane as a helical span at residues 201–222; that stretch reads VSSIVLLMTPFCLVLLSYIQII. The Cytoplasmic portion of the chain corresponds to 223-236; the sequence is STILKIQSREGRKK. A helical transmembrane segment spans residues 237-261; the sequence is AFHTCASHLTVVALCYGVAIFTYIQ. Residues 262 to 272 lie on the Extracellular side of the membrane; the sequence is PHSSPSVLQEK. Residues 273–292 traverse the membrane as a helical segment; the sequence is LFSVFYAILTPMLNPMIYSL. The Cytoplasmic segment spans residues 293–317; that stretch reads RNKEVKGAWQKLLWKFSGLTSKLAT.

Belongs to the G-protein coupled receptor 1 family.

Its subcellular location is the cell membrane. Its function is as follows. Odorant receptor. The polypeptide is Olfactory receptor 2F1 (OR2F1) (Homo sapiens (Human)).